We begin with the raw amino-acid sequence, 66 residues long: Small ribosomal subunit protein bS21 (66 aa).

Belongs to the bacterial ribosomal protein bS21 family.

The polypeptide is Small ribosomal subunit protein bS21 (Rickettsia akari (strain Hartford)).